The primary structure comprises 107 residues: 4-carboxymethyl-4-methylbutenolide mutase (107 aa).

H26 functions as the Proton donor/acceptor in the catalytic mechanism. Residues H26 and Y39 each coordinate 3-methylmuconolactone. Positions 26 and 39 each coordinate 4-methylmuconolactone.

This sequence belongs to the MmlI family. As to quaternary structure, homodimer.

It catalyses the reaction 4-methylmuconolactone = 3-methylmuconolactone. With respect to regulation, inhibited by p-chloromercuribenzoate. Its function is as follows. Isomerase involved in the degradation of 4-methylsalicylate and 5-methylsalicylate. Catalyzes the isomerization of the dead-end metabolite 4-methylmuconolactone (4-ML) to 3-methylmuconolactone (3-ML), which can then be further degraded through a modified 3-oxoadipate pathway. Can also use 1-methylbislactone but not 3-methyl-cis,cis-muconate. The chain is 4-carboxymethyl-4-methylbutenolide mutase from Pseudomonas reinekei.